Reading from the N-terminus, the 334-residue chain is Putative 2-hydroxyacid dehydrogenase UNK4.10 (334 aa).

Residues Gly166–Ile167, Thr244–Arg246, and Asp270 each bind NAD(+). Arg246 is an active-site residue. Residue Glu275 is part of the active site. Residue His293 is the Proton donor of the active site. Residue His293–Thr296 participates in NAD(+) binding.

This sequence belongs to the D-isomer specific 2-hydroxyacid dehydrogenase family.

This chain is Putative 2-hydroxyacid dehydrogenase UNK4.10, found in Schizosaccharomyces pombe (strain 972 / ATCC 24843) (Fission yeast).